We begin with the raw amino-acid sequence, 513 residues long: NAD(P)H-quinone oxidoreductase subunit 2, chloroplastic (513 aa).

14 helical membrane-spanning segments follow: residues 11-31 (NLITILPECVLIICLLTILMI), 38-58 (SVWLSNIALLGLLTSTFILLF), 78-98 (GFTIAFRCLLTLSSALCIPLS), 112-132 (FLILLLTATLGGMFLCGANDL), 133-153 (VTIFVSLECLSLSSYLLAGQA), 167-187 (LLMGGASSSILVYGFSWLYGL), 219-239 (FGALGLWVAFVCILVGIGFKI), 256-276 (PTPVVAFLSVGSKAAGLALAT), 290-310 (WHIVLEIVAFLSMVFGNLIAA), 318-338 (MLAYSSISQAGYLLIAILVGN), 348-368 (YLLIYTFMNLGAFACTVIFGL), 389-409 (AFALSICLLSLAGMPPLAGFF), 422-442 (HLYLLVYTGLITSVISLYYYL), and 478-498 (LGLTLCVLASSILGFFMNPLI).

This sequence belongs to the complex I subunit 2 family. In terms of assembly, NDH is composed of at least 16 different subunits, 5 of which are encoded in the nucleus.

It is found in the plastid. Its subcellular location is the chloroplast thylakoid membrane. The enzyme catalyses a plastoquinone + NADH + (n+1) H(+)(in) = a plastoquinol + NAD(+) + n H(+)(out). It catalyses the reaction a plastoquinone + NADPH + (n+1) H(+)(in) = a plastoquinol + NADP(+) + n H(+)(out). In terms of biological role, NDH shuttles electrons from NAD(P)H:plastoquinone, via FMN and iron-sulfur (Fe-S) centers, to quinones in the photosynthetic chain and possibly in a chloroplast respiratory chain. The immediate electron acceptor for the enzyme in this species is believed to be plastoquinone. Couples the redox reaction to proton translocation, and thus conserves the redox energy in a proton gradient. This Staurastrum punctulatum (Green alga) protein is NAD(P)H-quinone oxidoreductase subunit 2, chloroplastic.